Consider the following 245-residue polypeptide: Orotidine 5'-phosphate decarboxylase (245 aa).

Residues aspartate 22, lysine 44, 71–80, threonine 131, arginine 192, glutamine 201, glycine 221, and arginine 222 each bind substrate; that span reads DLKFHDIPNT. Lysine 73 (proton donor) is an active-site residue.

Belongs to the OMP decarboxylase family. Type 1 subfamily. In terms of assembly, homodimer.

It catalyses the reaction orotidine 5'-phosphate + H(+) = UMP + CO2. It functions in the pathway pyrimidine metabolism; UMP biosynthesis via de novo pathway; UMP from orotate: step 2/2. In terms of biological role, catalyzes the decarboxylation of orotidine 5'-monophosphate (OMP) to uridine 5'-monophosphate (UMP). The polypeptide is Orotidine 5'-phosphate decarboxylase (Shigella boydii serotype 18 (strain CDC 3083-94 / BS512)).